Here is a 249-residue protein sequence, read N- to C-terminus: Small ribosomal subunit protein eS6 (249 aa).

Basic and acidic residues predominate over residues 216–229 (RMKEAKEKRQEQIA). Residues 216–249 (RMKEAKEKRQEQIAKRRRLSSLRASTSKSESSQK) form a disordered region. 5 positions are modified to phosphoserine: S235, S236, S240, S244, and S247. A compositionally biased stretch (low complexity) spans 236 to 249 (SLRASTSKSESSQK).

Belongs to the eukaryotic ribosomal protein eS6 family. As to quaternary structure, component of the small ribosomal subunit. Part of the small subunit (SSU) processome, composed of more than 70 proteins and the RNA chaperone small nucleolar RNA (snoRNA) U3. Post-translationally, ribosomal protein S6 is the major substrate of protein kinases in eukaryote ribosomes. The phosphorylation is stimulated by growth factors, tumor promoting agents, and mitogens. It is dephosphorylated at growth arrest.

It is found in the cytoplasm. It localises to the nucleus. Its subcellular location is the nucleolus. Functionally, component of the 40S small ribosomal subunit. Plays an important role in controlling cell growth and proliferation through the selective translation of particular classes of mRNA. Part of the small subunit (SSU) processome, first precursor of the small eukaryotic ribosomal subunit. During the assembly of the SSU processome in the nucleolus, many ribosome biogenesis factors, an RNA chaperone and ribosomal proteins associate with the nascent pre-rRNA and work in concert to generate RNA folding, modifications, rearrangements and cleavage as well as targeted degradation of pre-ribosomal RNA by the RNA exosome. The protein is Small ribosomal subunit protein eS6 (RPS6) of Gallus gallus (Chicken).